A 428-amino-acid polypeptide reads, in one-letter code: CRS2-associated factor 1, mitochondrial (428 aa).

A mitochondrion-targeting transit peptide spans 1 to 21; the sequence is MLLLAGLLRRARPPRRPSVRR. Disordered stretches follow at residues 33–100 and 129–152; these read PPAS…REPK and HADDPAPAAERELEEARRRERERV. 2 CRM domains span residues 155-253 and 275-371; these read EPLT…KRPV and EGLT…IQDN. The segment at 378–428 is disordered; sequence SVLEEESAGAESENGDQEQASSDWASDECSQLSSSDEMPDDKSAISEADSD. Acidic residues predominate over residues 380–393; the sequence is LEEESAGAESENGD. Polar residues predominate over residues 394-413; the sequence is QEQASSDWASDECSQLSSSD.

Part of large ribonucleo-protein complexes that include group IIB introns.

The protein localises to the mitochondrion. May be involved in the splicing of group IIB introns in mitochondria. The chain is CRS2-associated factor 1, mitochondrial from Oryza sativa subsp. japonica (Rice).